The primary structure comprises 232 residues: Large ribosomal subunit protein uL1 (232 aa).

It belongs to the universal ribosomal protein uL1 family. In terms of assembly, part of the 50S ribosomal subunit.

Binds directly to 23S rRNA. The L1 stalk is quite mobile in the ribosome, and is involved in E site tRNA release. Its function is as follows. Protein L1 is also a translational repressor protein, it controls the translation of the L11 operon by binding to its mRNA. This chain is Large ribosomal subunit protein uL1, found in Cutibacterium acnes (strain DSM 16379 / KPA171202) (Propionibacterium acnes).